A 161-amino-acid polypeptide reads, in one-letter code: Arginine repressor (161 aa).

The protein belongs to the ArgR family.

It is found in the cytoplasm. It functions in the pathway amino-acid biosynthesis; L-arginine biosynthesis [regulation]. Functionally, regulates arginine biosynthesis genes. This is Arginine repressor from Corynebacterium aurimucosum (strain ATCC 700975 / DSM 44827 / CIP 107346 / CN-1) (Corynebacterium nigricans).